The sequence spans 212 residues: FMN-dependent NADH:quinone oxidoreductase (212 aa).

FMN is bound by residues S9, 15-17 (SVS), and 138-141 (TRGG).

It belongs to the azoreductase type 1 family. As to quaternary structure, homodimer. It depends on FMN as a cofactor.

The catalysed reaction is 2 a quinone + NADH + H(+) = 2 a 1,4-benzosemiquinone + NAD(+). It catalyses the reaction N,N-dimethyl-1,4-phenylenediamine + anthranilate + 2 NAD(+) = 2-(4-dimethylaminophenyl)diazenylbenzoate + 2 NADH + 2 H(+). Quinone reductase that provides resistance to thiol-specific stress caused by electrophilic quinones. Functionally, also exhibits azoreductase activity. Catalyzes the reductive cleavage of the azo bond in aromatic azo compounds to the corresponding amines. This Delftia acidovorans (strain DSM 14801 / SPH-1) protein is FMN-dependent NADH:quinone oxidoreductase.